A 450-amino-acid chain; its full sequence is Tubulin beta-2 chain (450 aa).

8 residues coordinate GTP: Gln-11, Glu-69, Ser-138, Gly-142, Thr-143, Gly-144, Asn-204, and Asn-226. Glu-69 serves as a coordination point for Mg(2+). The tract at residues Ala-428–Gln-450 is disordered. Acidic residues predominate over residues Thr-429–Gln-450.

The protein belongs to the tubulin family. In terms of assembly, dimer of alpha and beta chains. A typical microtubule is a hollow water-filled tube with an outer diameter of 25 nm and an inner diameter of 15 nm. Alpha-beta heterodimers associate head-to-tail to form protofilaments running lengthwise along the microtubule wall with the beta-tubulin subunit facing the microtubule plus end conferring a structural polarity. Microtubules usually have 13 protofilaments but different protofilament numbers can be found in some organisms and specialized cells. It depends on Mg(2+) as a cofactor. Post-translationally, cleaved by caspase ced-3 in vitro.

Its subcellular location is the cytoplasm. It is found in the cytoskeleton. Tubulin is the major constituent of microtubules, a cylinder consisting of laterally associated linear protofilaments composed of alpha- and beta-tubulin heterodimers. Microtubules grow by the addition of GTP-tubulin dimers to the microtubule end, where a stabilizing cap forms. Below the cap, tubulin dimers are in GDP-bound state, owing to GTPase activity of alpha-tubulin. Required for the normal dynamic behavior of the non-centrosomal microtubules in the epidermal syncytium. Involved in the redistribution of microtubule end-binding protein EB1/ebp-2 caused by wounding. Required to modulate expression in the epidermis of antimicrobial peptides, such as nlp-29, after wounding, or fungal infection. The chain is Tubulin beta-2 chain (tbb-2) from Caenorhabditis elegans.